Consider the following 162-residue polypeptide: uncharacterized protein (162 aa).

The HTH asnC-type domain maps to 6–78 (LDDLDRNILR…ALIVLEVGKP (73 aa)). Positions 25-44 (ISELSEQLKKPESTIHFRIK) form a DNA-binding region, H-T-H motif.

This is an uncharacterized protein from Pyrococcus furiosus (strain ATCC 43587 / DSM 3638 / JCM 8422 / Vc1).